The primary structure comprises 302 residues: 4-hydroxy-tetrahydrodipicolinate synthase (302 aa).

Threonine 46 lines the pyruvate pocket. The active-site Proton donor/acceptor is the tyrosine 134. The active-site Schiff-base intermediate with substrate is lysine 162. Valine 204 serves as a coordination point for pyruvate.

This sequence belongs to the DapA family. Homotetramer; dimer of dimers.

It localises to the cytoplasm. The enzyme catalyses L-aspartate 4-semialdehyde + pyruvate = (2S,4S)-4-hydroxy-2,3,4,5-tetrahydrodipicolinate + H2O + H(+). It functions in the pathway amino-acid biosynthesis; L-lysine biosynthesis via DAP pathway; (S)-tetrahydrodipicolinate from L-aspartate: step 3/4. Functionally, catalyzes the condensation of (S)-aspartate-beta-semialdehyde [(S)-ASA] and pyruvate to 4-hydroxy-tetrahydrodipicolinate (HTPA). The protein is 4-hydroxy-tetrahydrodipicolinate synthase of Xanthomonas campestris pv. campestris (strain ATCC 33913 / DSM 3586 / NCPPB 528 / LMG 568 / P 25).